Here is a 330-residue protein sequence, read N- to C-terminus: DNA-directed RNA polymerase subunit alpha (330 aa).

The interval 1-229 (MKNLKFIKPF…DHFNVLVELS (229 aa)) is alpha N-terminal domain (alpha-NTD). Positions 245 to 330 (AHNYVLDLEI…HSVEEDKDKH (86 aa)) are alpha C-terminal domain (alpha-CTD).

This sequence belongs to the RNA polymerase alpha chain family. Homodimer. The RNAP catalytic core consists of 2 alpha, 1 beta, 1 beta' and 1 omega subunit. When a sigma factor is associated with the core the holoenzyme is formed, which can initiate transcription.

The catalysed reaction is RNA(n) + a ribonucleoside 5'-triphosphate = RNA(n+1) + diphosphate. Functionally, DNA-dependent RNA polymerase catalyzes the transcription of DNA into RNA using the four ribonucleoside triphosphates as substrates. This chain is DNA-directed RNA polymerase subunit alpha, found in Aster yellows witches'-broom phytoplasma (strain AYWB).